The primary structure comprises 213 residues: 3-demethoxyubiquinol 3-hydroxylase (213 aa).

The Fe cation site is built by Glu-62, Glu-92, His-95, Glu-144, Glu-176, and His-179.

Belongs to the COQ7 family. It depends on Fe cation as a cofactor.

It localises to the cell membrane. The catalysed reaction is a 5-methoxy-2-methyl-3-(all-trans-polyprenyl)benzene-1,4-diol + AH2 + O2 = a 3-demethylubiquinol + A + H2O. The protein operates within cofactor biosynthesis; ubiquinone biosynthesis. Catalyzes the hydroxylation of 2-nonaprenyl-3-methyl-6-methoxy-1,4-benzoquinol during ubiquinone biosynthesis. This chain is 3-demethoxyubiquinol 3-hydroxylase, found in Chromohalobacter salexigens (strain ATCC BAA-138 / DSM 3043 / CIP 106854 / NCIMB 13768 / 1H11).